The chain runs to 1026 residues: DNA polymerase catalytic subunit (1026 aa).

Residues 664 to 695 (LKTWLAKRKSIKKELEQCQDAKMKTILDKQQL) are a coiled coil.

It belongs to the DNA polymerase type-B family.

It localises to the host nucleus. The catalysed reaction is DNA(n) + a 2'-deoxyribonucleoside 5'-triphosphate = DNA(n+1) + diphosphate. In terms of biological role, replicates viral genomic DNA. The chain is DNA polymerase catalytic subunit (9) from Alcelaphine herpesvirus 1 (strain C500) (AlHV-1).